Reading from the N-terminus, the 872-residue chain is Adhesive plaque matrix protein (872 aa).

Positions 1 to 20 are cleaved as a signal peptide; sequence MEGIKLNLCLLCIFSCDIFA. A nonrepetitive linker region spans residues 21-41; that stretch reads LSNGNIHNVYGSAYSGASAGA. Repeat copies occupy residues 124 to 133, 134 to 143, 144 to 153, 154 to 163, 174 to 183, 184 to 192, 193 to 202, 203 to 212, 213 to 221, 222 to 231, 232 to 241, 242 to 251, 252 to 261, 262 to 271, 272 to 281, 282 to 291, 292 to 301, 302 to 311, 312 to 321, 322 to 331, 332 to 341, 342 to 351, 352 to 361, 362 to 371, 372 to 381, 382 to 391, 402 to 411, 412 to 421, 422 to 431, 432 to 441, 442 to 451, 452 to 461, 462 to 471, 472 to 481, 482 to 491, 502 to 511, 512 to 521, 522 to 531, 532 to 541, 542 to 551, 552 to 561, 562 to 571, 572 to 581, 582 to 591, 602 to 611, 612 to 621, 622 to 631, 632 to 641, 642 to 651, 652 to 661, 662 to 671, 672 to 681, 682 to 691, 702 to 711, 712 to 721, 722 to 731, 732 to 741, 742 to 751, 752 to 761, 762 to 771, 772 to 781, 782 to 791, 792 to 801, 812 to 821, 822 to 831, 832 to 841, 842 to 851, 852 to 861, and 862 to 871. The interval 124 to 871 is 69 X 10 AA tandem repeats of Y-[KRQ]-[PSTAHQR]-K-[AIPTSKGV]-[STR]-Y-[PTSVA]-[PSTQA]-[STYIPAQ]; the sequence is YKAKTSYPPS…YKPKISYPSQ (748 aa). The nonapeptide 1 stretch occupies residues 184-192; that stretch reads YKRKPSYTP. The segment at 213–221 is nonapeptide 2; that stretch reads YKRKPSYTP. Pro residues-rich tracts occupy residues 273 to 282 and 291 to 302; these read KPKPSYPPTY and TYKPKPSYPPTY. The segment at 273 to 781 is disordered; sequence KPKPSYPPTY…YKPKPSYASS (509 aa). Low complexity predominate over residues 320-360; sequence TPYKQKPSYPPIYKSKSSYPTSYKSKKTYPPTYKPKITYPP. Residues 361–372 are compositionally biased toward pro residues; that stretch reads TYKPKPSYPPSY. Residues 377–390 show a composition bias toward low complexity; that stretch reads TYSPTYKPKITYPP. Pro residues predominate over residues 391-402; that stretch reads TYKPKPSYPPSY. Over residues 403 to 450 the composition is skewed to low complexity; it reads KPKTTYPPTYKPKISYPPTYKPKASYVSSYKSKKTYPPTYKPKISYPP. Pro residues-rich tracts occupy residues 451-462 and 471-482; these read TYKPKPSYPPTY. The span at 501-540 shows a compositional bias: low complexity; sequence PYKQKPSYPPIYKSKSSYPTSYKSKKTYPPTYKPKITYPP. Positions 541-552 are enriched in pro residues; the sequence is TYKPKPSYPPSY. 2 stretches are compositionally biased toward low complexity: residues 568–590 and 600–640; these read YPPT…TYPP and TPYK…TYPP. The segment covering 641 to 652 has biased composition (pro residues); it reads TYKPKPSYPPSY. 2 stretches are compositionally biased toward low complexity: residues 677–690 and 698–719; these read SYPP…TYPP and YPPT…PSYP. Residues 754–763 are compositionally biased toward low complexity; it reads PKPSYASSYK.

Post-translationally, hydroxylated on proline (mono- or dihydroxylation) and tyrosine residues (to L-DOPA = 3',4'-dihydroxyphenylalanine) of the tandem repeats. In terms of tissue distribution, produced by the byssal gland.

It localises to the secreted. Provides adhesiveness to the mussel's foot. Mussels produce one of the strongest water insoluble glues. The mussel's adhesive is a bundle of threads, called a byssus, formed by a fibrous collagenous core coated with adhesive proteins. The chain is Adhesive plaque matrix protein (FP1) from Mytilus coruscus (Sea mussel).